Consider the following 414-residue polypeptide: Imidazolonepropionase (414 aa).

Residues histidine 77 and histidine 79 each contribute to the Fe(3+) site. Residues histidine 77 and histidine 79 each contribute to the Zn(2+) site. Residues arginine 86, tyrosine 149, and histidine 184 each contribute to the 4-imidazolone-5-propanoate site. Residue tyrosine 149 coordinates N-formimidoyl-L-glutamate. Histidine 249 contacts Fe(3+). Residue histidine 249 participates in Zn(2+) binding. Glutamate 252 contacts 4-imidazolone-5-propanoate. Fe(3+) is bound at residue aspartate 323. A Zn(2+)-binding site is contributed by aspartate 323. N-formimidoyl-L-glutamate is bound by residues asparagine 325 and glycine 327. 4-imidazolone-5-propanoate is bound at residue serine 328.

The protein belongs to the metallo-dependent hydrolases superfamily. HutI family. The cofactor is Zn(2+). Fe(3+) serves as cofactor.

Its subcellular location is the cytoplasm. It carries out the reaction 4-imidazolone-5-propanoate + H2O = N-formimidoyl-L-glutamate. It functions in the pathway amino-acid degradation; L-histidine degradation into L-glutamate; N-formimidoyl-L-glutamate from L-histidine: step 3/3. Catalyzes the hydrolytic cleavage of the carbon-nitrogen bond in imidazolone-5-propanoate to yield N-formimidoyl-L-glutamate. It is the third step in the universal histidine degradation pathway. This Phocaeicola vulgatus (strain ATCC 8482 / DSM 1447 / JCM 5826 / CCUG 4940 / NBRC 14291 / NCTC 11154) (Bacteroides vulgatus) protein is Imidazolonepropionase.